Reading from the N-terminus, the 311-residue chain is Mitoferrin (311 aa).

Solcar repeat units follow at residues 15–102 (HSIP…MKSF), 111–195 (EHTL…WQQV), and 202–302 (YDPK…FKFM). 6 helical membrane-spanning segments follow: residues 17-36 (IPVHLAAGALAGAVEHCVMF), 77-96 (GVNAVAAGSMPAHALYFTVY), 112-132 (HTLAYGASGVVATLIHDAVMN), 170-189 (SYTTQLAMNVPFQAIHFMGY), 204-223 (PKSHLIAGGLAGGLAAAVTT), and 277-296 (GLQARVIFQVPATALSWSVY).

Belongs to the mitochondrial carrier (TC 2.A.29) family.

Its subcellular location is the mitochondrion inner membrane. Functionally, mitochondrial iron transporter that mediates iron uptake. Probably required for heme synthesis of hemoproteins and Fe-S cluster assembly. The protein is Mitoferrin of Caenorhabditis briggsae.